We begin with the raw amino-acid sequence, 72 residues long: Teretoxin Tsu11.2 (72 aa).

Residues 1–21 (MMAKATMAFCFLLMLTTVMLP) form the signal peptide. Positions 22 to 30 (TEGKTIAGR) are excised as a propeptide.

Belongs to the teretoxin H (TH) superfamily. Contains 4 disulfide bonds. Expressed by the venom duct.

It is found in the secreted. The polypeptide is Teretoxin Tsu11.2 (Terebra subulata (Chocolate spotted auger)).